The primary structure comprises 88 residues: Large ribosomal subunit protein bL27 (88 aa).

The interval 1–21 (MAHKKGTGSTRNGRDSRAQRL) is disordered.

This sequence belongs to the bacterial ribosomal protein bL27 family.

This Picosynechococcus sp. (strain ATCC 27264 / PCC 7002 / PR-6) (Agmenellum quadruplicatum) protein is Large ribosomal subunit protein bL27.